Reading from the N-terminus, the 310-residue chain is Zinc finger protein unc-98 (310 aa).

Polar residues predominate over residues 73–84 (GSSSAQTPTKSS). A disordered region spans residues 73–102 (GSSSAQTPTKSSGGALDGSDQQEVRQDGTS). 2 C2H2-type zinc fingers span residues 113-135 (YKCR…ERIH) and 141-163 (YVCG…AAQH). The segment at 169 to 188 (YKCECGRTFFSYTEMLYHKH) adopts a C2H2-type 3; degenerate zinc-finger fold. The interval 198-310 (APETTTIKVS…RTSGYVTPRF (113 aa)) is interaction with myo-3. Residues 246-268 (YICEYCSKSYSDSRGLAYHMYSH) form a C2H2-type 4 zinc finger.

Interacts with hum-6, mep-1, myo-3, unc-96 and unc-97/PINCH. In terms of tissue distribution, expressed in embryos from 1.5- to 2-fold stage in myofibrils. In larvae and adults, it is expressed in body wall muscle, and in addition, anal depressor muscle and vulval muscles. More specifically it is found in the thick filaments of muscle fibers.

It localises to the nucleus. The protein resides in the cytoplasm. Its function is as follows. Probable transcription factor required for muscle structure. Its dual subcellular localization suggests that it may function both as a muscle adhesion complex protein and as a transcription factor, or work together with transcription factors, to influence gene expression. Thought to act as a molecular bridge between unc-97 and myo-3 at the M-line of muscles, possibly in a signaling role. Plays a role in the formation of muscle connections, also called muscle arm extensions, between the body wall and the motor axons in the dorsal and ventral cord. This Caenorhabditis elegans protein is Zinc finger protein unc-98 (unc-98).